Reading from the N-terminus, the 192-residue chain is GTP cyclohydrolase 1 (192 aa).

Zn(2+) contacts are provided by Cys-81, His-84, and Cys-153.

The protein belongs to the GTP cyclohydrolase I family. In terms of assembly, toroid-shaped homodecamer, composed of two pentamers of five dimers.

It carries out the reaction GTP + H2O = 7,8-dihydroneopterin 3'-triphosphate + formate + H(+). It participates in cofactor biosynthesis; 7,8-dihydroneopterin triphosphate biosynthesis; 7,8-dihydroneopterin triphosphate from GTP: step 1/1. The sequence is that of GTP cyclohydrolase 1 from Streptococcus mutans serotype c (strain ATCC 700610 / UA159).